Consider the following 162-residue polypeptide: MRNWELSVSPSFLELCDQYVSLCESPSFSGPSCLNDMAPDDILGNCDLFAEAADALFPDCLLEEVEAASGLAFETNEEVEGFVFPDCPERPGQECRSCKQHREMSGDPSILCSLCYMRLTACFVYSPVSDVEDEEPTEGVAENSLKRQADSSLCSSSPKRFC.

The segment at glutamate 134–cysteine 162 is disordered. The segment covering aspartate 150–cysteine 162 has biased composition (polar residues).

The chain is Early E1A 18 kDa protein from Tree shrew adenovirus serotype 1 (TSAdV-1).